Consider the following 230-residue polypeptide: Ephrin-A3 (230 aa).

A signal peptide spans 1–22; the sequence is MAAAPLLLLLLLVPVPLLPLLA. Positions 30–161 constitute an Ephrin RBD domain; sequence GNRHAVYWNS…RMKVFVCCAS (132 aa). Asn38, Asn67, Asn84, and Asn92 each carry an N-linked (GlcNAc...) asparagine glycan. Disulfide bonds link Cys63–Cys102 and Cys91–Cys150. Gly206 carries the GPI-anchor amidated glycine lipid modification. Positions 207–230 are cleaved as a propeptide — removed in mature form; the sequence is TSPKREHLPLAVGIAFFLMTLLAS.

Belongs to the ephrin family. As to quaternary structure, interacts with EPHA8; activates EPHA8. In terms of tissue distribution, expressed in myogenic progenitor cells.

It is found in the cell membrane. Its function is as follows. Cell surface GPI-bound ligand for Eph receptors, a family of receptor tyrosine kinases which are crucial for migration, repulsion and adhesion during neuronal, vascular and epithelial development. Binds promiscuously Eph receptors residing on adjacent cells, leading to contact-dependent bidirectional signaling into neighboring cells. The signaling pathway downstream of the receptor is referred to as forward signaling while the signaling pathway downstream of the ephrin ligand is referred to as reverse signaling. This is Ephrin-A3 (Efna3) from Mus musculus (Mouse).